The sequence spans 292 residues: Phosphatidylglycerol--prolipoprotein diacylglyceryl transferase (292 aa).

4 helical membrane-spanning segments follow: residues Leu-18–Ile-38, Leu-67–Tyr-87, Gly-105–Leu-125, and Ile-129–Gly-149. A 1,2-diacyl-sn-glycero-3-phospho-(1'-sn-glycerol) is bound at residue Arg-150. 3 helical membrane passes run Gln-193 to Trp-213, Gly-222 to Val-242, and Gly-266 to Leu-286.

It belongs to the Lgt family.

Its subcellular location is the cell inner membrane. The enzyme catalyses L-cysteinyl-[prolipoprotein] + a 1,2-diacyl-sn-glycero-3-phospho-(1'-sn-glycerol) = an S-1,2-diacyl-sn-glyceryl-L-cysteinyl-[prolipoprotein] + sn-glycerol 1-phosphate + H(+). It functions in the pathway protein modification; lipoprotein biosynthesis (diacylglyceryl transfer). Functionally, catalyzes the transfer of the diacylglyceryl group from phosphatidylglycerol to the sulfhydryl group of the N-terminal cysteine of a prolipoprotein, the first step in the formation of mature lipoproteins. This chain is Phosphatidylglycerol--prolipoprotein diacylglyceryl transferase, found in Cereibacter sphaeroides (strain ATCC 17025 / ATH 2.4.3) (Rhodobacter sphaeroides).